The sequence spans 155 residues: Large ribosomal subunit protein eL24 (155 aa).

The span at 93-123 (KRNARPETRNATRAKHAEAAKERKEKEAERR) shows a compositional bias: basic and acidic residues. Positions 93 to 155 (KRNARPETRN…SAPKVQATSR (63 aa)) are disordered.

Belongs to the eukaryotic ribosomal protein eL24 family.

This Yarrowia lipolytica (strain CLIB 122 / E 150) (Yeast) protein is Large ribosomal subunit protein eL24 (RPL24).